The primary structure comprises 464 residues: Integrator complex subunit 12 (464 aa).

Residues 42-98 are disordered; that stretch reads GNDSVYRPQPKEVEQPKAMLSKVKPETKASSSTPSSSILSKPLASEKVKKEAEKRTA. Over residues 69–84 the composition is skewed to low complexity; sequence KASSSTPSSSILSKPL. The span at 85–98 shows a compositional bias: basic and acidic residues; that stretch reads ASEKVKKEAEKRTA. The PHD-type zinc finger occupies 156 to 212; sequence GLACVVCRQMTVFSGNQLVECQECHNLYHQDCHRPQVTDKDVNDPRLVWYCARCTRQ. Disordered regions lie at residues 216–252 and 312–445; these read MAQK…LKSK and TNSQ…SQLN. The segment covering 227 to 239 has biased composition (low complexity); that stretch reads PAPSAVSAVTPVA. Over residues 312 to 329 the composition is skewed to polar residues; sequence TNSQATSGKPPSLSSVQK. Low complexity predominate over residues 339-371; sequence SKAGSVSKSGSGGSSSTIPLKPLPPLILGKTGL. The span at 372–382 shows a compositional bias: polar residues; it reads SRSMSSDNVSK. Residues 384–421 show a composition bias toward low complexity; the sequence is GLPSPNPSSSGSVSSLSSQLGSNNGSSNTAGSNVNSSN. Residues 428 to 445 are compositionally biased toward polar residues; it reads SMQQSGAKGPTSQESQLN.

It belongs to the Integrator subunit 12 family. Component of the Integrator complex, composed of core subunits INTS1, INTS2, INTS3, INTS4, INTS5, INTS6, INTS7, INTS8, INTS9/RC74, INTS10, INTS11/CPSF3L, INTS12, INTS13, INTS14 and INTS15. The core complex associates with protein phosphatase 2A subunits PPP2CA and PPP2R1A, to form the Integrator-PP2A (INTAC) complex.

It localises to the nucleus. In terms of biological role, component of the integrator complex, a multiprotein complex that terminates RNA polymerase II (Pol II) transcription in the promoter-proximal region of genes. The integrator complex provides a quality checkpoint during transcription elongation by driving premature transcription termination of transcripts that are unfavorably configured for transcriptional elongation: the complex terminates transcription by (1) catalyzing dephosphorylation of the C-terminal domain (CTD) of Pol II subunit POLR2A/RPB1 and SUPT5H/SPT5, (2) degrading the exiting nascent RNA transcript via endonuclease activity and (3) promoting the release of Pol II from bound DNA. The integrator complex is also involved in terminating the synthesis of non-coding Pol II transcripts, such as enhancer RNAs (eRNAs), small nuclear RNAs (snRNAs), telomerase RNAs and long non-coding RNAs (lncRNAs). The polypeptide is Integrator complex subunit 12 (ints12) (Xenopus laevis (African clawed frog)).